A 178-amino-acid chain; its full sequence is Ribosome maturation factor RimM (178 aa).

The region spanning 100 to 178 (AADEYYWYQL…VMRVEWDADF (79 aa)) is the PRC barrel domain.

It belongs to the RimM family. Binds ribosomal protein uS19.

It localises to the cytoplasm. In terms of biological role, an accessory protein needed during the final step in the assembly of 30S ribosomal subunit, possibly for assembly of the head region. Essential for efficient processing of 16S rRNA. May be needed both before and after RbfA during the maturation of 16S rRNA. It has affinity for free ribosomal 30S subunits but not for 70S ribosomes. This chain is Ribosome maturation factor RimM, found in Pseudomonas putida (strain W619).